Reading from the N-terminus, the 445-residue chain is Tubulin beta chain (445 aa).

GTP is bound by residues Gln-11, Glu-69, Ser-138, Gly-142, Thr-143, Gly-144, Asn-204, and Asn-226. Glu-69 provides a ligand contact to Mg(2+).

Belongs to the tubulin family. As to quaternary structure, dimer of alpha and beta chains. A typical microtubule is a hollow water-filled tube with an outer diameter of 25 nm and an inner diameter of 15 nM. Alpha-beta heterodimers associate head-to-tail to form protofilaments running lengthwise along the microtubule wall with the beta-tubulin subunit facing the microtubule plus end conferring a structural polarity. Microtubules usually have 13 protofilaments but different protofilament numbers can be found in some organisms and specialized cells. Requires Mg(2+) as cofactor.

It is found in the cytoplasm. Its subcellular location is the cytoskeleton. In terms of biological role, tubulin is the major constituent of microtubules, a cylinder consisting of laterally associated linear protofilaments composed of alpha- and beta-tubulin heterodimers. Microtubules grow by the addition of GTP-tubulin dimers to the microtubule end, where a stabilizing cap forms. Below the cap, tubulin dimers are in GDP-bound state, owing to GTPase activity of alpha-tubulin. The chain is Tubulin beta chain (TUB-2) from Schizophyllum commune (Split gill fungus).